A 235-amino-acid chain; its full sequence is UPF0758 protein A1S_2918 (235 aa).

Residues 1-20 form a disordered region; sequence MNTSIKNWPEQERPRERLLQ. Residues 9–18 are compositionally biased toward basic and acidic residues; it reads PEQERPRERL. The MPN domain occupies 105-227; that stretch reads SLHSSHLVLD…SFSFAEQQLL (123 aa). Zn(2+)-binding residues include His-176, His-178, and Asp-189. Positions 176–189 match the JAMM motif motif; it reads HNHPFGSPQPSPED.

Belongs to the UPF0758 family.

This Acinetobacter baumannii (strain ATCC 17978 / DSM 105126 / CIP 53.77 / LMG 1025 / NCDC KC755 / 5377) protein is UPF0758 protein A1S_2918.